A 407-amino-acid polypeptide reads, in one-letter code: Phosphopentomutase (407 aa).

Residues D10, D306, H311, D347, H348, and H359 each coordinate Mn(2+).

This sequence belongs to the phosphopentomutase family. It depends on Mn(2+) as a cofactor.

It is found in the cytoplasm. The enzyme catalyses 2-deoxy-alpha-D-ribose 1-phosphate = 2-deoxy-D-ribose 5-phosphate. It carries out the reaction alpha-D-ribose 1-phosphate = D-ribose 5-phosphate. The protein operates within carbohydrate degradation; 2-deoxy-D-ribose 1-phosphate degradation; D-glyceraldehyde 3-phosphate and acetaldehyde from 2-deoxy-alpha-D-ribose 1-phosphate: step 1/2. In terms of biological role, isomerase that catalyzes the conversion of deoxy-ribose 1-phosphate (dRib-1-P) and ribose 1-phosphate (Rib-1-P) to deoxy-ribose 5-phosphate (dRib-5-P) and ribose 5-phosphate (Rib-5-P), respectively. The polypeptide is Phosphopentomutase (Pectobacterium atrosepticum (strain SCRI 1043 / ATCC BAA-672) (Erwinia carotovora subsp. atroseptica)).